Reading from the N-terminus, the 333-residue chain is MRIAVDAMGGDYAPLEITKGVYKALENFNIEIVLVGNKDQLDKYVKEEKGLTVVHTTETITNNEPPVAAIRKKKDSSMAVGIDMLKKGEVDAFLSAGNTGALMAGSLLKIGRIKGIDRPALAPILPTLNGATILLDAGSNTDCKPINLFQFAIMGNVYAQKMLNIDNPKIGLFNIGAEEEKGNELTKQVYDLIKNSHLNFIGNVEGRDIAYGVADVVTCDGFVGNAILKSMEGTASVISSLLKQELQRNLLTKLGAILIYNGLKNIVKKMDYTEYGGAPLLGIKKPVIKAHGSSKSKAIFNAIRQAKTIVEMDVISHIQREIELIGDDISAAK.

The protein belongs to the PlsX family. As to quaternary structure, homodimer. Probably interacts with PlsY.

The protein resides in the cytoplasm. It catalyses the reaction a fatty acyl-[ACP] + phosphate = an acyl phosphate + holo-[ACP]. It functions in the pathway lipid metabolism; phospholipid metabolism. Catalyzes the reversible formation of acyl-phosphate (acyl-PO(4)) from acyl-[acyl-carrier-protein] (acyl-ACP). This enzyme utilizes acyl-ACP as fatty acyl donor, but not acyl-CoA. The chain is Phosphate acyltransferase from Thermoanaerobacterium thermosaccharolyticum (strain ATCC 7956 / DSM 571 / NCIMB 9385 / NCA 3814 / NCTC 13789 / WDCM 00135 / 2032) (Clostridium thermosaccharolyticum).